The chain runs to 432 residues: Glycerophosphocholine acyltransferase 1 (432 aa).

Over 1–110 (MYKLDNNDID…DSIFFKNSSR (110 aa)) the chain is Cytoplasmic. At Ser78 the chain carries Phosphoserine. A helical transmembrane segment spans residues 111-131 (LEKAFYPFTLFNIFFIGFLMG). Arg132 is a topological domain (lumenal). A helical transmembrane segment spans residues 133 to 153 (FPEWFHVYYTILFFVLMPIRF). Topologically, residues 154 to 162 (YTYYKTKNH) are cytoplasmic. The chain crosses the membrane as a helical span at residues 163-183 (YFLADFCYFVNMLCLLFIWIF). Over 184 to 187 (PYSY) the chain is Lumenal. A helical transmembrane segment spans residues 188–208 (SLFQSCFAFTFGTLCFAVITW). Topologically, residues 209-221 (RNSLVIHSIDKTT) are cytoplasmic. Residues 222–242 (SCFIHIIPPCVMYVIYHGLPL) traverse the membrane as a helical segment. Over 243–263 (EYKIERFPGAIIQSELDIKKN) the chain is Lumenal. The helical transmembrane segment at 264-284 (ILWTSLYYLVWQSLYHYFITL) threads the bilayer. At 285–318 (KKSSKIKSGERMTSFEYLTTHQFKNFWAVKLRSP) the chain is on the cytoplasmic side. Residues 319-339 (WPMIIYTLSQYFYQLFTMLLC) form a helical membrane-spanning segment. Topologically, residues 340 to 346 (GIWIRYK) are lumenal. Residues 347 to 369 (LAAALFLTIVFLWASHNGATYYI) traverse the membrane as a helical segment. Over 370–432 (DHYGKNFEKE…DSSSVSSKSD (63 aa)) the chain is Cytoplasmic. Residues 413–432 (LNVNRDEDFDDSSSVSSKSD) form a disordered region.

The protein belongs to the GPC1 family.

It localises to the membrane. It catalyses the reaction sn-glycerol 3-phosphocholine + an acyl-CoA = a 1-acyl-sn-glycero-3-phosphocholine + CoA. It carries out the reaction sn-glycero-3-phosphoethanolamine + an acyl-CoA = a monoacyl-sn-glycero-3-phosphoethanolamine + CoA. The catalysed reaction is sn-glycero-3-phosphoethanolamine + (9Z)-octadecenoyl-CoA = (9Z-octadecenoyl)-sn-glycero-3-phosphoethanolamine + CoA. The enzyme catalyses sn-glycerol 3-phosphocholine + hexadecanoyl-CoA = hexadecanoyl-sn-glycero-3-phosphocholine + CoA. It catalyses the reaction (9Z,12Z)-octadecadienoyl-CoA + sn-glycerol 3-phosphocholine = (9Z,12Z-octadecadienoyl)-sn-glycero-3-phosphocholine + CoA. It carries out the reaction (12R)-hydroxy-(9Z)-octadecenoyl-CoA + sn-glycerol 3-phosphocholine = (12R-hydroxy-9Z-octadecenoyl)-sn-glycero-3-phosphocholine + CoA. The catalysed reaction is (9Z,12Z,15Z)-octadecatrienoyl-CoA + sn-glycerol 3-phosphocholine = (9Z,12Z,15Z-octadecatrienoyl)-sn-glycero-3-phosphocholine + CoA. The enzyme catalyses sn-glycerol 3-phosphocholine + (9Z)-octadecenoyl-CoA = (9Z-octadecenoyl)-sn-glycero-3-phosphocholine + CoA. It catalyses the reaction 1-(9Z-octadecenoyl)-sn-glycero-3-phosphoethanolamine + sn-glycerol 3-phosphocholine = (9Z-octadecenoyl)-sn-glycero-3-phosphocholine + sn-glycero-3-phosphoethanolamine. With respect to regulation, the GPCAT activity is sensitive to N-ethylmaleimide, phenanthroline, and divalent cations including Ca(2+), Mg(2+), Mn(2+) and Zn(2+). The activity is also inhibited by glycerol-3-phosphate (G3P). Functionally, glycerophosphocholine acyltransferase (GPCAT) that utilizes acyl-CoA to acylate glycero-3-phosphocholine (GPC), forming lysophosphatidylcholine (LPC). Shows broad acyl specificities with a preference for 16:0-CoA, polyunsaturated acyl-CoA, and the hydroxylated ricinoleoyl-CoA. Also catalyzes the acylation of glycero-3-phosphoethanolamine (GPE) with acyl-CoA. In addition to acyl-CoA, GPCAT efficiently utilizes LPC and lysophosphatidylethanolamine (LPE) as acyl donors in the acylation of GPC. Contributes to the maintenance of phosphatidylcholine (PC) homeostasis and might also have specific functions in acyl editing of PC, such as transferring acyl groups modified at the sn-2 position of PC to the sn-1. Involved in postsynthetic PC remodeling that produces more saturated PC species. The polypeptide is Glycerophosphocholine acyltransferase 1 (Saccharomyces cerevisiae (strain ATCC 204508 / S288c) (Baker's yeast)).